Here is a 275-residue protein sequence, read N- to C-terminus: 2,3,4,5-tetrahydropyridine-2,6-dicarboxylate N-succinyltransferase (275 aa).

The substrate site is built by R105 and D142.

Belongs to the transferase hexapeptide repeat family. As to quaternary structure, homotrimer.

Its subcellular location is the cytoplasm. The enzyme catalyses (S)-2,3,4,5-tetrahydrodipicolinate + succinyl-CoA + H2O = (S)-2-succinylamino-6-oxoheptanedioate + CoA. Its pathway is amino-acid biosynthesis; L-lysine biosynthesis via DAP pathway; LL-2,6-diaminopimelate from (S)-tetrahydrodipicolinate (succinylase route): step 1/3. This Histophilus somni (strain 129Pt) (Haemophilus somnus) protein is 2,3,4,5-tetrahydropyridine-2,6-dicarboxylate N-succinyltransferase.